Here is a 311-residue protein sequence, read N- to C-terminus: MSKVAIIGSGFVGATSAFTLALSGTVTDIVLVDLNKDKAIGDALDISHGIPLIQPVNVYAGDYKDVKGADVIVVTAGAAQKPGETRLDLVKKNTAIFKSMIPELLKYNDKAIYLIVTNPVDILTYVTYKISGLPWGRVFGSGTVLDSSRFRYLLSKHCNIDPRNVHGRIIGEHGDTEFAAWSITNISGISFNEYCSICGRVCNTNFRKEVEEEVVNAAYKIIDKKGATYYAVAVAVRRIVECILRDENSILTVSSPLNGQYGVKDVSLSLPSIVGRNGVARILDLPLSDEEVEKFRHSASVMADVIKQLDI.

NAD(+) contacts are provided by residues V12, D33, K38, Y63, and 77 to 78 (GA). Substrate-binding residues include Q80 and R86. Residues S99, 116–118 (VTN), and S141 each bind NAD(+). 118 to 121 (NPVD) provides a ligand contact to substrate. 146–149 (DSSR) contributes to the substrate binding site. Residues R151 and H166 each contribute to the beta-D-fructose 1,6-bisphosphate site. The Proton acceptor role is filled by H173. The residue at position 219 (Y219) is a Phosphotyrosine. Residue T228 participates in substrate binding.

This sequence belongs to the LDH/MDH superfamily. LDH family. As to quaternary structure, homotetramer.

The protein localises to the cytoplasm. The enzyme catalyses (S)-lactate + NAD(+) = pyruvate + NADH + H(+). It functions in the pathway fermentation; pyruvate fermentation to lactate; (S)-lactate from pyruvate: step 1/1. Allosterically activated by fructose 1,6-bisphosphate (FBP). In terms of biological role, catalyzes the conversion of lactate to pyruvate. This is L-lactate dehydrogenase from Thermoanaerobacterium saccharolyticum (strain DSM 8691 / JW/SL-YS485).